The sequence spans 910 residues: Protein translocase subunit SecA (910 aa).

Residues Q89, 107 to 111, and D502 each bind ATP; that span reads GEGKT. 4 residues coordinate Zn(2+): C889, C891, C900, and H901.

It belongs to the SecA family. In terms of assembly, monomer and homodimer. Part of the essential Sec protein translocation apparatus which comprises SecA, SecYEG and auxiliary proteins SecDF-YajC and YidC. Zn(2+) serves as cofactor.

The protein resides in the cell inner membrane. It is found in the cytoplasm. The catalysed reaction is ATP + H2O + cellular proteinSide 1 = ADP + phosphate + cellular proteinSide 2.. Its function is as follows. Part of the Sec protein translocase complex. Interacts with the SecYEG preprotein conducting channel. Has a central role in coupling the hydrolysis of ATP to the transfer of proteins into and across the cell membrane, serving both as a receptor for the preprotein-SecB complex and as an ATP-driven molecular motor driving the stepwise translocation of polypeptide chains across the membrane. In Bartonella bacilliformis (strain ATCC 35685 / KC583 / Herrer 020/F12,63), this protein is Protein translocase subunit SecA.